A 215-amino-acid chain; its full sequence is Thiopurine S-methyltransferase (215 aa).

S-adenosyl-L-methionine is bound by residues Trp10, Leu45, Glu66, and Arg123.

It belongs to the class I-like SAM-binding methyltransferase superfamily. TPMT family.

Its subcellular location is the cytoplasm. The catalysed reaction is S-adenosyl-L-methionine + a thiopurine = S-adenosyl-L-homocysteine + a thiopurine S-methylether.. The chain is Thiopurine S-methyltransferase from Pseudomonas putida (strain W619).